We begin with the raw amino-acid sequence, 236 residues long: 1-(5-phosphoribosyl)-5-[(5-phosphoribosylamino)methylideneamino] imidazole-4-carboxamide isomerase (236 aa).

The Proton acceptor role is filled by Asp8. Asp129 acts as the Proton donor in catalysis.

The protein belongs to the HisA/HisF family.

The protein resides in the cytoplasm. It carries out the reaction 1-(5-phospho-beta-D-ribosyl)-5-[(5-phospho-beta-D-ribosylamino)methylideneamino]imidazole-4-carboxamide = 5-[(5-phospho-1-deoxy-D-ribulos-1-ylimino)methylamino]-1-(5-phospho-beta-D-ribosyl)imidazole-4-carboxamide. It participates in amino-acid biosynthesis; L-histidine biosynthesis; L-histidine from 5-phospho-alpha-D-ribose 1-diphosphate: step 4/9. The protein is 1-(5-phosphoribosyl)-5-[(5-phosphoribosylamino)methylideneamino] imidazole-4-carboxamide isomerase of Methanosphaerula palustris (strain ATCC BAA-1556 / DSM 19958 / E1-9c).